A 387-amino-acid chain; its full sequence is Beta-alanyl-dopamine/carcinine hydrolase (387 aa).

The protein belongs to the peptidase C45 family. The unprocessed protein forms homodimers. May form heterodimers composed of a 15 kDa alpha subunit and a 30 kDa beta subunit. Post-translationally, the protein is synthesized as a 43 kDa precursor which is then self-processed into a 15 kDa alpha subunit and a 30 kDa beta subunit. Processing appears to be necessary for beta-alanyl-dopamine/carcinine hydrolase activity. The beta subunit carries the beta-alanyl-dopamine/carcinine hydrolase activity. As to expression, expressed in body, head, optic lobes and retina (at protein level). Expressed in photoreceptor cells R1-R6 in the lamina and in photoreceptor cells R7 and R8 in the medulla (at protein level).

It is found in the cell projection. It localises to the axon. The protein resides in the cytoplasm. It carries out the reaction carcinine + H2O = histamine + beta-alanine. It catalyses the reaction beta-alanyl-dopamine + H2O = dopamine + beta-alanine. In terms of biological role, in the cuticle, catalyzes the hydrolysis of beta-alanyl-dopamine releasing dopamine and beta-alanine; dopamine is a metabolite involved in the pigmentation and sclerotization of the insect cuticle. In the photoreceptor cells, catalyzes the hydrolysis of carcinine releasing histamine and beta-alanine contributing to the recycling of the neurotransmitter histamine in the optical nerve system. Also, regulates the cuticular hydrocarbon composition in females. The sequence is that of Beta-alanyl-dopamine/carcinine hydrolase from Drosophila melanogaster (Fruit fly).